The chain runs to 301 residues: Heterogeneous nuclear ribonucleoprotein D-like (301 aa).

RRM domains lie at 29–111 (GKMF…KGKE) and 114–193 (KKVF…QPKE). N6-methyllysine is present on Lys-42. Lys-90 is covalently cross-linked (Glycyl lysine isopeptide (Lys-Gly) (interchain with G-Cter in SUMO2)). Lys-97 is modified (N6-acetyllysine). Phosphoserine is present on Ser-122. Disordered regions lie at residues 194–229 (VYRQQQQQQKGGRGAAAGGRGGARGRGRGQGQNWNQ) and 279–301 (GQQSTYGKASRGGGNHQNNYQPY). Positions 204 to 223 (GGRGAAAGGRGGARGRGRGQ) are enriched in gly residues. Residues 223–301 (QGQNWNQGFN…GNHQNNYQPY (79 aa)) are necessary for interaction with TNPO1. At Arg-289 the chain carries Dimethylated arginine; alternate. An Omega-N-methylarginine; alternate modification is found at Arg-289.

As to quaternary structure, interacts with TNPO1. Interacts with ZNF148. Dimethylation of Arg-289 is probably of the asymmetric type. As to expression, expressed in skeletal muscle, myoblast, myotube, heart, brain, liver, kidney, heart, lung, stomach, small intestine, large intestine, spleen, and testis (at protein level). Expressed in brain, skeletal muscle, heart, lung, liver, stomach, small intestine, large intestine, kidney, spleen and testis.

The protein resides in the nucleus. It localises to the cytoplasm. Acts as a transcriptional regulator. Promotes transcription repression. Promotes transcription activation in differentiated myotubes. Binds to double- and single-stranded DNA sequences. Binds to the transcription suppressor CATR sequence of the COX5B promoter. Binds with high affinity to RNA molecules that contain AU-rich elements (AREs) found within the 3'-UTR of many proto-oncogenes and cytokine mRNAs. Binds both to nuclear and cytoplasmic poly(A) mRNAs. Binds to poly(G) and poly(A), but not to poly(U) or poly(C) RNA homopolymers. Binds to the 5'-ACUAGC-3' RNA consensus sequence. This chain is Heterogeneous nuclear ribonucleoprotein D-like (Hnrnpdl), found in Mus musculus (Mouse).